Reading from the N-terminus, the 96-residue chain is Cell division topological specificity factor (96 aa).

Belongs to the MinE family.

Functionally, prevents the cell division inhibition by proteins MinC and MinD at internal division sites while permitting inhibition at polar sites. This ensures cell division at the proper site by restricting the formation of a division septum at the midpoint of the long axis of the cell. The sequence is that of Cell division topological specificity factor from Nitrosococcus oceani (strain ATCC 19707 / BCRC 17464 / JCM 30415 / NCIMB 11848 / C-107).